A 336-amino-acid chain; its full sequence is MSKINLLLLCGGGSAEHDISLLSANYFETSLAKSEQFNVLRVVLDKFGQYQTAAGDDCELTNNREIRFRDETKAPWPVDYVIPCIHGYPGETGDIQSYFNLIQLPYFGCESEASSNCFNKITAKMWFSALGIPNTPYIFLNQYDDEAIAQTQAALENWGSIFVKAASQGSSVGCYKVDDSSKVAGVLKDAFGYAPYVIVEKTIKARELEVAVYEYQGEVVATLPGEIICDSNTFYTFDEKYAKSSKARTDVVAQNVPTDISEQIRAYAIKAFKGMKLRHLSRIDFFLTQDNEILLNEINTFPGSTPISMFPKMLQNHGHDFTEYLSLVINGQLAAK.

The 207-residue stretch at 124–330 (KMWFSALGIP…FTEYLSLVIN (207 aa)) folds into the ATP-grasp domain. 154 to 209 (ALENWGSIFVKAASQGSSVGCYKVDDSSKVAGVLKDAFGYAPYVIVEKTIKARELE) serves as a coordination point for ATP. 3 residues coordinate Mg(2+): D284, E297, and N299.

It belongs to the D-alanine--D-alanine ligase family. The cofactor is Mg(2+). It depends on Mn(2+) as a cofactor.

It localises to the cytoplasm. It carries out the reaction 2 D-alanine + ATP = D-alanyl-D-alanine + ADP + phosphate + H(+). It participates in cell wall biogenesis; peptidoglycan biosynthesis. Functionally, cell wall formation. The protein is D-alanine--D-alanine ligase of Shewanella sp. (strain MR-4).